The sequence spans 231 residues: Flagellar L-ring protein (231 aa).

A signal peptide spans 1–18 (MNRLLSLFALGGAVLLAG). A lipid anchor (N-palmitoyl cysteine) is attached at cysteine 19. Cysteine 19 carries S-diacylglycerol cysteine lipidation.

It belongs to the FlgH family. As to quaternary structure, the basal body constitutes a major portion of the flagellar organelle and consists of four rings (L,P,S, and M) mounted on a central rod.

The protein resides in the cell outer membrane. It localises to the bacterial flagellum basal body. In terms of biological role, assembles around the rod to form the L-ring and probably protects the motor/basal body from shearing forces during rotation. The sequence is that of Flagellar L-ring protein from Pseudomonas putida (strain W619).